A 122-amino-acid chain; its full sequence is Proteasome assembly chaperone 3 (122 aa).

N-acetylmethionine is present on M1.

This sequence belongs to the PSMG3 family. Homodimer. Interacts with PSMG4. Interacts directly with alpha and beta subunits of the 20S proteasome but dissociates before the formation of half-proteasomes, probably upon recruitment of POMP.

In terms of biological role, chaperone protein which promotes assembly of the 20S proteasome. May cooperate with PSMG1-PSMG2 heterodimers to orchestrate the correct assembly of proteasomes. In Homo sapiens (Human), this protein is Proteasome assembly chaperone 3.